We begin with the raw amino-acid sequence, 646 residues long: 1-deoxy-D-xylulose-5-phosphate synthase (646 aa).

Thiamine diphosphate contacts are provided by residues His86 and 127–129 (AHS). Asp158 contacts Mg(2+). Thiamine diphosphate-binding positions include 159–160 (GA), Asn188, Tyr295, and Glu377. Residue Asn188 participates in Mg(2+) binding.

This sequence belongs to the transketolase family. DXPS subfamily. As to quaternary structure, homodimer. It depends on Mg(2+) as a cofactor. The cofactor is thiamine diphosphate.

It carries out the reaction D-glyceraldehyde 3-phosphate + pyruvate + H(+) = 1-deoxy-D-xylulose 5-phosphate + CO2. The protein operates within metabolic intermediate biosynthesis; 1-deoxy-D-xylulose 5-phosphate biosynthesis; 1-deoxy-D-xylulose 5-phosphate from D-glyceraldehyde 3-phosphate and pyruvate: step 1/1. Its function is as follows. Catalyzes the acyloin condensation reaction between C atoms 2 and 3 of pyruvate and glyceraldehyde 3-phosphate to yield 1-deoxy-D-xylulose-5-phosphate (DXP). The protein is 1-deoxy-D-xylulose-5-phosphate synthase of Burkholderia cenocepacia (strain HI2424).